A 286-amino-acid polypeptide reads, in one-letter code: Translocon-associated protein subunit alpha (286 aa).

Positions 1-21 (MRLLPRLLLLFLLAFPAAVLL) are cleaved as a signal peptide. Residues 22-207 (RGGPGGSLAL…EREDGLDGET (186 aa)) are Lumenal-facing. Residues 46–75 (IIEDEDDEAEVEEDEPTDLAEDKEEEDVSS) show a composition bias toward acidic residues. Residues 46-83 (IIEDEDDEAEVEEDEPTDLAEDKEEEDVSSEPEASPSA) form a disordered region. Residues asparagine 136 and asparagine 191 are each glycosylated (N-linked (GlcNAc...) asparagine). A helical transmembrane segment spans residues 208–228 (IFMYMFLAGLGLLVVVGLHQL). Topologically, residues 229-286 (LESRKRKRPIQKVEMGTSSQNDVDMSWIPQETLNQINKASPRRQPRKRAQKRSVGSDE) are cytoplasmic. Residues 236–286 (RPIQKVEMGTSSQNDVDMSWIPQETLNQINKASPRRQPRKRAQKRSVGSDE) are disordered. Over residues 244–266 (GTSSQNDVDMSWIPQETLNQINK) the composition is skewed to polar residues. Serine 247 carries the phosphoserine modification. A Phosphothreonine modification is found at threonine 260. Serine 268 carries the phosphoserine modification. Over residues 268 to 279 (SPRRQPRKRAQK) the composition is skewed to basic residues.

The protein belongs to the TRAP-alpha family. As to quaternary structure, heterotetramer of TRAP-alpha, TRAP-beta, TRAP-delta and TRAP-gamma. Interacts with palmitoylated calnexin (CALX), the interaction is required for efficient folding of glycosylated proteins.

It localises to the endoplasmic reticulum membrane. Its function is as follows. TRAP proteins are part of a complex whose function is to bind calcium to the ER membrane and thereby regulate the retention of ER resident proteins. May be involved in the recycling of the translocation apparatus after completion of the translocation process or may function as a membrane-bound chaperone facilitating folding of translocated proteins. The chain is Translocon-associated protein subunit alpha (Ssr1) from Mus musculus (Mouse).